The sequence spans 650 residues: Aminopeptidase B (650 aa).

N-acetylalanine is present on A2. S7 is modified (phosphoserine). G298–N302 is a binding site for substrate. A Zn(2+)-binding site is contributed by H325. The active-site Proton acceptor is the E326. Positions 329 and 348 each coordinate Zn(2+). K446 carries the post-translational modification N6-acetyllysine.

Belongs to the peptidase M1 family. Requires Zn(2+) as cofactor.

It localises to the secreted. The catalysed reaction is Release of N-terminal Arg and Lys from oligopeptides when P1' is not Pro. Also acts on arylamides of Arg and Lys.. Functionally, exopeptidase which selectively removes arginine and/or lysine residues from the N-terminus of several peptide substrates including Arg(0)-Leu-enkephalin, Arg(0)-Met-enkephalin and Arg(-1)-Lys(0)-somatostatin-14. Can hydrolyze leukotriene A4 (LTA-4) into leukotriene B4 (LTB-4). This chain is Aminopeptidase B (RNPEP), found in Homo sapiens (Human).